Reading from the N-terminus, the 180-residue chain is Small ribosomal subunit protein uS4 (180 aa).

In terms of domain architecture, S4 RNA-binding spans 103–174; the sequence is RRLQTIVYKK…HPERMMIEKA (72 aa).

It belongs to the universal ribosomal protein uS4 family. As to quaternary structure, part of the 30S ribosomal subunit. Contacts protein S5. The interaction surface between S4 and S5 is involved in control of translational fidelity.

Functionally, one of the primary rRNA binding proteins, it binds directly to 16S rRNA where it nucleates assembly of the body of the 30S subunit. In terms of biological role, with S5 and S12 plays an important role in translational accuracy. The chain is Small ribosomal subunit protein uS4 from Pyrococcus abyssi (strain GE5 / Orsay).